The following is a 231-amino-acid chain: 3-oxoadipate CoA-transferase subunit A (231 aa).

25-31 is a CoA binding site; the sequence is GGFGTAG.

This sequence belongs to the 3-oxoacid CoA-transferase subunit A family. As to quaternary structure, heterodimer.

It carries out the reaction 3-oxoadipate + succinyl-CoA = 3-oxoadipyl-CoA + succinate. The protein operates within aromatic compound metabolism; beta-ketoadipate pathway; acetyl-CoA and succinyl-CoA from 3-oxoadipate: step 1/2. This is 3-oxoadipate CoA-transferase subunit A (pcaI) from Pseudomonas putida (Arthrobacter siderocapsulatus).